A 635-amino-acid chain; its full sequence is Probable potassium transport system protein Kup (635 aa).

A run of 12 helical transmembrane segments spans residues 20-40, 62-82, 111-131, 149-169, 180-200, 223-243, 259-279, 292-312, 349-369, 377-397, 408-428, and 429-449; these read MALV…SPLY, VLSL…VTII, AYVV…DGVI, PSLH…VFMV, VFGP…IWNI, GWHG…GEAL, WYFF…ALVL, AVPS…AVIA, IYVP…VLIF, VAYG…LALV, WVLP…IANG, and AKLL…FTLM.

This sequence belongs to the HAK/KUP transporter (TC 2.A.72) family.

The protein resides in the cell inner membrane. It carries out the reaction K(+)(in) + H(+)(in) = K(+)(out) + H(+)(out). Transport of potassium into the cell. Likely operates as a K(+):H(+) symporter. This is Probable potassium transport system protein Kup from Xanthomonas campestris pv. campestris (strain 8004).